The sequence spans 442 residues: tRNA modification GTPase MnmE (442 aa).

Arg-24, Glu-84, and Arg-124 together coordinate (6S)-5-formyl-5,6,7,8-tetrahydrofolate. Residues 218-366 (GARVALFGPV…LRDDMLGRLW (149 aa)) form the TrmE-type G domain. Residues 228 to 233 (NAGKST), 247 to 253 (DDEPGTT), and 272 to 275 (DTAG) each bind GTP. Mg(2+) is bound by residues Ser-232 and Thr-253. Lys-442 is a (6S)-5-formyl-5,6,7,8-tetrahydrofolate binding site.

The protein belongs to the TRAFAC class TrmE-Era-EngA-EngB-Septin-like GTPase superfamily. TrmE GTPase family. Homodimer. Heterotetramer of two MnmE and two MnmG subunits. It depends on K(+) as a cofactor.

The protein localises to the cytoplasm. Its function is as follows. Exhibits a very high intrinsic GTPase hydrolysis rate. Involved in the addition of a carboxymethylaminomethyl (cmnm) group at the wobble position (U34) of certain tRNAs, forming tRNA-cmnm(5)s(2)U34. The polypeptide is tRNA modification GTPase MnmE (Myxococcus xanthus (strain DK1622)).